The sequence spans 762 residues: Polymeric immunoglobulin receptor (762 aa).

The first 18 residues, 1-18, serve as a signal peptide directing secretion; sequence MTLFFLTCLLAVFPVVSM. The Ig-like V-type 1; required for binding to polymeric IgA and IgM domain maps to 19 to 120; it reads KSPIFGPPEI…GVGINNRGLS (102 aa). The Extracellular portion of the chain corresponds to 19–636; sequence KSPIFGPPEI…SSAGQGGSSK (618 aa). Intrachain disulfides connect Cys-40–Cys-110 and Cys-56–Cys-64. Asn-83 and Asn-135 each carry an N-linked (GlcNAc...) asparagine glycan. Ig-like V-type domains follow at residues 145 to 238, 251 to 351, 363 to 460, and 464 to 563; these read GGKV…DLHV, GSSV…ETTF, GGSV…LKIV, and PNLK…VYVA. 8 disulfides stabilise this stretch: Cys-152/Cys-221, Cys-258/Cys-324, Cys-272/Cys-280, Cys-370/Cys-443, Cys-384/Cys-394, Cys-484/Cys-546, Cys-488/Cys-522, and Cys-498/Cys-505. Asn-291 carries N-linked (GlcNAc...) asparagine glycosylation. An N-linked (GlcNAc...) asparagine glycan is attached at Asn-423. The N-linked (GlcNAc...) asparagine glycan is linked to Asn-530. Residues 604–634 form a disordered region; the sequence is FVDTQAKDPEDAAGGSIASADPGSSAGQGGS. Residues 637–659 form a helical membrane-spanning segment; that stretch reads VVVSTLVPLALVLALGVLVVGVL. Over 660-762 the chain is Cytoplasmic; that stretch reads RARHRKNVDR…ANIQDGPSKA (103 aa).

Interacts (mainly via CDR1-like domain) with dimeric IgA. Interacts (mainly via CDR2-like domain) with pentameric IgM. As to quaternary structure, either free or part of the secretory IgA (sIgA) complex that consists of two, four or five IgA monomers, and two additional non-Ig polypeptides, namely the JCHAIN and the secretory component (the proteolytic product of PIGR). Free secretory component interacts with bacterial antigens toxA of C.difficile and eae of E.coli. Post-translationally, N-glycosylated. Carries predominantly biantennary complex type glycans which are largely non-fucosylated. Sialylation with NeuAc is common, except for Asn-291 which carries exclusively high mannose glycans. N-glycans attached to Asn-83: Gal2GlcNAc2Man3GlcNAc2; Gal2GlcNAc2Man3GlcNAc2(Fuc); Gal1GlcNAc1Man4GlcNAc2(Fuc); Gal1GlcNAc1Man3GlcNAc2; Gal1GlcNAc1Man4GlcNAc2 and NeuAc1Gal2GlcNAc2Man3GlcNAc2. N-glycans attached to Asn-135: Gal2GlcNAc2Man3GlcNAc2; Gal1GlcNAc1Man3GlcNAc2 and NeuAc1Gal2GlcNAc2Man3GlcNAc2. N-glycans attached to Asn-291: Man5-8GlcNAc2. N-glycans attached to Asn-423: NeuAc1Gal2GlcNAc2Man3GlcNAc2. N-glycans attached to Asn-530: Gal2GlcNAc2Man3GlcNAc2; Gal1GlcNAc1Man3GlcNAc2 and NeuAc1Gal2GlcNAc2Man3GlcNAc2. N-glycosylation is required for anchoring IgA molecules to mucus but is not necessary for Ig binding.

The protein localises to the cell membrane. It is found in the secreted. Its function is as follows. Mediates selective transcytosis of polymeric IgA and IgM across mucosal epithelial cells. Binds polymeric IgA and IgM at the basolateral surface of epithelial cells. The complex is then transported across the cell to be secreted at the apical surface. During this process, a cleavage occurs that separates the extracellular (known as the secretory component) from the transmembrane segment. Through its N-linked glycans ensures anchoring of secretory IgA (sIgA) molecules to mucus lining the epithelial surface to neutralize extracellular pathogens. On its own (free form) may act as a non-specific microbial scavenger to prevent pathogen interaction with epithelial cells. This Equus asinus (Donkey) protein is Polymeric immunoglobulin receptor (PIGR).